The following is a 315-amino-acid chain: Olfactory receptor 10H2 (315 aa).

At 1-25 (MLGLNHTSMSEFILVGFSAFPHLQL) the chain is on the extracellular side. An N-linked (GlcNAc...) asparagine glycan is attached at asparagine 5. Residues 26 to 46 (MLFLLFLLMYLFTLLGNLLIM) form a helical membrane-spanning segment. The Cytoplasmic portion of the chain corresponds to 47–54 (ATVWSERS). The chain crosses the membrane as a helical span at residues 55 to 75 (LHTPMYLFLCVLSVSEILYTV). The Extracellular portion of the chain corresponds to 76–99 (AIIPRMLADLLSTQRSIAFLACAS). Cysteine 97 and cysteine 189 are oxidised to a cystine. The chain crosses the membrane as a helical span at residues 100-120 (QMFFSFSFGFTHSFLLTVMGY). Residues 121 to 139 (DRYVAICHPLRYNVLMSPR) lie on the Cytoplasmic side of the membrane. Residues 140–160 (GCACLVGCSWAGGSVMGMVVT) traverse the membrane as a helical segment. At 161–197 (SAIFQLTFCGSHEIQHFLCHVPPLLKLACGNNVPAVA) the chain is on the extracellular side. Residues 198–218 (LGVGLVCIMALLGCFLLILLS) form a helical membrane-spanning segment. The Cytoplasmic portion of the chain corresponds to 219–238 (YAFIVADILKIPSAEGRNKA). The helical transmembrane segment at 239–259 (FSTCASHLIVVIVHYGFASVI) threads the bilayer. At 260 to 272 (YLKPKGPHSQEGD) the chain is on the extracellular side. A helical membrane pass occupies residues 273 to 293 (TLMATTYAVLTPFLSPIIFSL). Over 294 to 315 (RNKELKVAMKRTFLSTLYSSGT) the chain is Cytoplasmic.

This sequence belongs to the G-protein coupled receptor 1 family.

The protein localises to the cell membrane. In terms of biological role, odorant receptor. The sequence is that of Olfactory receptor 10H2 (OR10H2) from Homo sapiens (Human).